A 397-amino-acid polypeptide reads, in one-letter code: Acetate kinase (397 aa).

Asparagine 7 is a Mg(2+) binding site. Residue lysine 14 participates in ATP binding. Residue arginine 91 participates in substrate binding. Residue aspartate 148 is the Proton donor/acceptor of the active site. ATP contacts are provided by residues 208–212 (HLGNG), 283–285 (DLR), and 331–335 (GVGEN). Glutamate 384 contributes to the Mg(2+) binding site.

This sequence belongs to the acetokinase family. As to quaternary structure, homodimer. The cofactor is Mg(2+). Mn(2+) is required as a cofactor.

Its subcellular location is the cytoplasm. It carries out the reaction acetate + ATP = acetyl phosphate + ADP. The protein operates within metabolic intermediate biosynthesis; acetyl-CoA biosynthesis; acetyl-CoA from acetate: step 1/2. In terms of biological role, catalyzes the formation of acetyl phosphate from acetate and ATP. Can also catalyze the reverse reaction. The polypeptide is Acetate kinase (Syntrophomonas wolfei subsp. wolfei (strain DSM 2245B / Goettingen)).